The primary structure comprises 196 residues: uncharacterized protein (196 aa).

The tract at residues 1-21 (MQPEVEPLISPNLGAPGSHRE) is disordered.

This is an uncharacterized protein from Mus musculus (Mouse).